Consider the following 255-residue polypeptide: MELDELCLLDALVYLEGFLAFVAFVGLQMVGSSYGRYSSQWSGRRVPARPAWFLQELPSMAWPLYECIRPAAARLGNLPNRVLLAMFLIHYVQRTLVFPVLIRGGKPTLLFTFVLAFLFCTLNGYLQSRYLSQFAVYAEDWVTHPCFLTGFALWLVGMVINIHSDHILRNLRKPGETGYKIPRGGLFEYVSSANYFGELVEWCGFALASWSLQGVVFALFTLCALFTRARQHHQWYLEKFEDYPKTRKILIPFLL.

5 helical membrane passes run 6–26, 82–102, 107–127, 142–162, and 205–225; these read LCLL…AFVG, VLLA…PVLI, PTLL…GYLQ, VTHP…VINI, and FALA…LCAL.

This sequence belongs to the steroid 5-alpha reductase family.

The protein localises to the microsome membrane. Its subcellular location is the endoplasmic reticulum membrane. The catalysed reaction is a 3-oxo-5alpha-steroid + NADP(+) = a 3-oxo-Delta(4)-steroid + NADPH + H(+). It carries out the reaction 5alpha-pregnane-3,20-dione + NADP(+) = progesterone + NADPH + H(+). It catalyses the reaction 17beta-hydroxy-5alpha-androstan-3-one + NADP(+) = testosterone + NADPH + H(+). The enzyme catalyses androst-4-ene-3,17-dione + NADPH + H(+) = 5alpha-androstan-3,17-dione + NADP(+). Functionally, converts testosterone into 5-alpha-dihydrotestosterone and progesterone or corticosterone into their corresponding 5-alpha-3-oxosteroids. It plays a central role in sexual differentiation and androgen physiology. In Mus musculus (Mouse), this protein is 3-oxo-5-alpha-steroid 4-dehydrogenase 1.